Here is a 197-residue protein sequence, read N- to C-terminus: MSQLTFIFAAMNAGKSTLLLQAAHNYVERGMAVELYTAALDTRAGLGVIRSRLGIERGASTFNADTVFDHRILERDTACLLIDESQFLRPVQVRQLHRLAHTSQVPIRCYGLRSDFLGHPFAGSAALLTLADEFEEVRAVCGCGKKATMNARLDATGARVSAGEQTLIGGNERYIAMCPRCFYLDSAGEQDAQSTAA.

Residues 9–16 and 83–86 each bind ATP; these read AAMNAGKS and DESQ. Glu-84 serves as the catalytic Proton acceptor. The Zn(2+) site is built by Cys-141, Cys-143, Cys-178, and Cys-181.

This sequence belongs to the thymidine kinase family. As to quaternary structure, homotetramer.

It localises to the cytoplasm. The enzyme catalyses thymidine + ATP = dTMP + ADP + H(+). The sequence is that of Thymidine kinase from Albidiferax ferrireducens (strain ATCC BAA-621 / DSM 15236 / T118) (Rhodoferax ferrireducens).